We begin with the raw amino-acid sequence, 416 residues long: MIVMFQKPRGTRDFLPEEMKKRRFVENKLREVFERYGYKEILTPTFESFELIAKKTGEEIRKQLYVFKDHGGREMALRPEMTSPVVRFYLNELKNLQKPLRLYYFANCFRYERPQAGRFREFWQMGCELIGCKEPLADAEVLNLAMDGLINIGLDFDVHIGHLGVLKGVLEKFNVSEEEEVKIRRLIDKEDYDNLKIYLTQILGEEKKELIFEILKFKGSREVLDELKEILKDFPKSMEAINNLEEILEFVIHDKYTINLGIARGLDYYTGMVFEIYGKKGAKQICGGGRYDNLIETFGGEPTPAVGFAYGFDRIMMNIDDLDIEEESILIIPVKKDKELIKKSLIIADKLRKAGKIVELEIMGRKLRKALDYANSRGFKKVIIVGEKELNEGKVTVKDMITGEQKLIGIDELTNF.

It belongs to the class-II aminoacyl-tRNA synthetase family.

The protein localises to the cytoplasm. The enzyme catalyses tRNA(His) + L-histidine + ATP = L-histidyl-tRNA(His) + AMP + diphosphate + H(+). This is Histidine--tRNA ligase (hisS) from Methanocaldococcus jannaschii (strain ATCC 43067 / DSM 2661 / JAL-1 / JCM 10045 / NBRC 100440) (Methanococcus jannaschii).